Reading from the N-terminus, the 166-residue chain is Endoribonuclease YbeY (166 aa).

Zn(2+) contacts are provided by His132, His136, and His142.

Belongs to the endoribonuclease YbeY family. Zn(2+) serves as cofactor.

The protein resides in the cytoplasm. In terms of biological role, single strand-specific metallo-endoribonuclease involved in late-stage 70S ribosome quality control and in maturation of the 3' terminus of the 16S rRNA. The sequence is that of Endoribonuclease YbeY from Clostridium botulinum (strain Loch Maree / Type A3).